A 65-amino-acid chain; its full sequence is Large ribosomal subunit protein bL35 (65 aa).

Positions 1-65 (MQKIKTNRSA…KELKRLLPGM (65 aa)) are disordered. Composition is skewed to basic residues over residues 10 to 19 (AAKRFKRTKS) and 33 to 47 (LTKK…LRKS). Positions 54-65 (NNKELKRLLPGM) are enriched in basic and acidic residues.

It belongs to the bacterial ribosomal protein bL35 family.

This Desulfosudis oleivorans (strain DSM 6200 / JCM 39069 / Hxd3) (Desulfococcus oleovorans) protein is Large ribosomal subunit protein bL35.